Reading from the N-terminus, the 333-residue chain is uncharacterized protein (333 aa).

The tract at residues 234-333 (PPLAPTSAPA…GLSSEFDSDD (100 aa)) is disordered. Residues 251–265 (VPPPVPAPPTPPPQE) show a composition bias toward pro residues. A compositionally biased stretch (polar residues) spans 324–333 (GLSSEFDSDD).

It is found in the cell projection. Its subcellular location is the cilium. The protein localises to the flagellum. This is an uncharacterized protein from Homo sapiens (Human).